An 862-amino-acid polypeptide reads, in one-letter code: Protein kintoun (862 aa).

Disordered regions lie at residues Lys-208–Lys-229, Thr-564–Arg-602, Gly-626–Pro-670, and Arg-743–Ser-854. Residues Thr-564 to Arg-586 are compositionally biased toward basic and acidic residues. Positions Thr-587–Glu-601 are enriched in basic residues. 2 stretches are compositionally biased toward basic and acidic residues: residues Arg-748–Glu-757 and Lys-766–Lys-785.

It belongs to the PIH1 family. Kintoun subfamily.

It localises to the cytoplasm. In terms of biological role, required for cytoplasmic pre-assembly of axonemal dyneins, thereby playing a central role in motility in cilia and flagella. Involved in pre-assembly of dynein arm complexes in the cytoplasm before intraflagellar transport loads them for the ciliary compartment. The protein is Protein kintoun of Anopheles gambiae (African malaria mosquito).